Consider the following 370-residue polypeptide: 3,5-dihydroxyphenylacetyl-CoA synthase (370 aa).

C158 is a catalytic residue.

Belongs to the thiolase-like superfamily. Chalcone/stilbene synthases family.

The catalysed reaction is 4 malonyl-CoA + 4 H(+) = (3,5-dihydroxyphenyl)acetyl-CoA + 4 CO2 + 3 CoA + H2O. It participates in antibiotic biosynthesis; vancomycin biosynthesis. Involved in the biosynthesis of the nonproteinogenic amino acid monomer (S)-3,5-dihydroxyphenylglycine (Dpg) responsible of the production of vancomycin and teicoplanin antibiotics. Catalyzes the Claisen condensation of four molecules of malonyl-CoA to yield 3,5-dihydroxyphenylacetyl-CoA (DPA-CoA) and three free coenzyme A (CoA). DpgA requires the presence of the dehydratases DpgB and DpgD to facilitate the aromatization of the DPA-S-DgpA or DPA-S-CoA intermediate. In Amycolatopsis orientalis (Nocardia orientalis), this protein is 3,5-dihydroxyphenylacetyl-CoA synthase (dpgA).